Reading from the N-terminus, the 264-residue chain is Chanoclavine-I dehydrogenase easD (264 aa).

An N-terminal signal peptide occupies residues 1–20 (MASVSSKIFAITGGASGIGA). NADP(+)-binding residues include Ile18, Asp66, Arg132, Tyr169, Lys173, and Thr204. The active-site Proton donor is Tyr169. Residue Lys173 is the Lowers pKa of active site Tyr of the active site.

This sequence belongs to the short-chain dehydrogenases/reductases (SDR) family. Homotetramer.

It carries out the reaction chanoclavine-I + NAD(+) = chanoclavine-I aldehyde + NADH + H(+). It functions in the pathway alkaloid biosynthesis; ergot alkaloid biosynthesis. Its function is as follows. Chanoclavine-I dehydrogenase; part of the gene cluster that mediates the biosynthesis of fungal ergot alkaloid. DmaW catalyzes the first step of ergot alkaloid biosynthesis by condensing dimethylallyl diphosphate (DMAP) and tryptophan to form 4-dimethylallyl-L-tryptophan. The second step is catalyzed by the methyltransferase easF that methylates 4-dimethylallyl-L-tryptophan in the presence of S-adenosyl-L-methionine, resulting in the formation of 4-dimethylallyl-L-abrine. The catalase easC and the FAD-dependent oxidoreductase easE then transform 4-dimethylallyl-L-abrine to chanoclavine-I which is further oxidized by easD in the presence of NAD(+), resulting in the formation of chanoclavine-I aldehyde. Chanoclavine-I aldehyde is the precursor of ergoamides and ergopeptines in Clavicipitaceae, and clavine-type alcaloids such as fumiclavine in Trichocomaceae. However, the metabolites downstream of chanoclavine-I aldehyde in Arthrodermataceae have not been identified yet. The polypeptide is Chanoclavine-I dehydrogenase easD (Arthroderma otae (strain ATCC MYA-4605 / CBS 113480) (Microsporum canis)).